Reading from the N-terminus, the 178-residue chain is CASP-like protein 4D1 (178 aa).

Ala-2 carries the N-acetylalanine modification. Over 2–14 (APPPPAPPSVTLR) the chain is Cytoplasmic. The chain crosses the membrane as a helical span at residues 15 to 35 (TVLLLLRVLTAAFLLITVVLI). The Extracellular segment spans residues 36 to 60 (STNTVTLEISSTSIKLPFNDVYAYR). A helical membrane pass occupies residues 61–81 (YMLSAAVIGLVYAVVQLFLTI). At 82 to 97 (SQFATGKTHPLTYQFD) the chain is on the cytoplasmic side. The helical transmembrane segment at 98–118 (FYGDKVISYLLATGSAAGFGV) threads the bilayer. The Extracellular segment spans residues 119–149 (SKDLKDTYIALIEFDSTDPVDKFFSKGYASA). Residues 150-170 (SLLLFAFVSLAVLSVFSSLAL) traverse the membrane as a helical segment. Over 171–178 (SKRPVPVS) the chain is Cytoplasmic.

This sequence belongs to the Casparian strip membrane proteins (CASP) family. Homodimer and heterodimers. Expressed in the root epidermis.

The protein resides in the cell membrane. The sequence is that of CASP-like protein 4D1 from Arabidopsis thaliana (Mouse-ear cress).